Consider the following 72-residue polypeptide: UPF0270 protein YheU (72 aa).

Belongs to the UPF0270 family.

The polypeptide is UPF0270 protein YheU (Salmonella choleraesuis (strain SC-B67)).